Consider the following 141-residue polypeptide: Large ribosomal subunit protein uL11 (141 aa).

The protein belongs to the universal ribosomal protein uL11 family. As to quaternary structure, part of the ribosomal stalk of the 50S ribosomal subunit. Interacts with L10 and the large rRNA to form the base of the stalk. L10 forms an elongated spine to which L12 dimers bind in a sequential fashion forming a multimeric L10(L12)X complex. In terms of processing, one or more lysine residues are methylated.

Functionally, forms part of the ribosomal stalk which helps the ribosome interact with GTP-bound translation factors. This is Large ribosomal subunit protein uL11 from Thermosipho africanus (strain TCF52B).